The primary structure comprises 989 residues: AP-2 complex subunit alpha-2 (989 aa).

HEAT repeat units lie at residues 112-149 (EMLP…KEVA), 188-225 (VTPD…ENPI), 368-402 (IMIK…MCDK), and 403-440 (NTCK…KFAS). Residues 610–745 (DNSNTTSNTA…SSSPISSGGS (136 aa)) are disordered. Positions 611–623 (NSNTTSNTANNSN) are enriched in low complexity. A compositionally biased stretch (polar residues) spans 624 to 638 (MINSQDSKISSGGFN). A compositionally biased stretch (low complexity) spans 639 to 703 (QSPQPSQQQQ…QPVYQQQQQA (65 aa)). The segment covering 704–714 (ESFSPVQSDTV) has biased composition (polar residues). Low complexity predominate over residues 715-745 (SSFGQQQQQQQGGFSSPTIQASSSPISSGGS).

Belongs to the adaptor complexes large subunit family. As to quaternary structure, adaptor protein complex 2 (AP-2) is a heterotetramer composed of two large adaptins (alpha-type and beta-type subunits), a medium adaptin (mu-type subunit AP50) and a small adaptin (sigma-type subunit AP17).

Its subcellular location is the cell membrane. The protein localises to the membrane. It localises to the coated pit. In terms of biological role, component of the adaptor complexes which link clathrin to receptors in coated vesicles. Clathrin-associated protein complexes are believed to interact with the cytoplasmic tails of membrane proteins, leading to their selection and concentration. In Dictyostelium discoideum (Social amoeba), this protein is AP-2 complex subunit alpha-2 (ap2a1-1).